The sequence spans 414 residues: Tryptophan synthase beta chain (414 aa).

A compositionally biased stretch (basic and acidic residues) spans Met-1–Phe-26. The disordered stretch occupies residues Met-1–Gly-27. Lys-109 carries the post-translational modification N6-(pyridoxal phosphate)lysine.

This sequence belongs to the TrpB family. In terms of assembly, tetramer of two alpha and two beta chains. It depends on pyridoxal 5'-phosphate as a cofactor.

The enzyme catalyses (1S,2R)-1-C-(indol-3-yl)glycerol 3-phosphate + L-serine = D-glyceraldehyde 3-phosphate + L-tryptophan + H2O. The protein operates within amino-acid biosynthesis; L-tryptophan biosynthesis; L-tryptophan from chorismate: step 5/5. Its function is as follows. The beta subunit is responsible for the synthesis of L-tryptophan from indole and L-serine. This Prochlorococcus marinus (strain MIT 9301) protein is Tryptophan synthase beta chain.